We begin with the raw amino-acid sequence, 103 residues long: N(4)-acetylcytidine amidohydrolase (103 aa).

The 96-residue stretch at 6-101 (ITFFQRFQDD…QIQFYVIEFK (96 aa)) folds into the ASCH domain. Lys-21 acts as the Proton acceptor in catalysis. Catalysis depends on Thr-24, which acts as the Nucleophile. Glu-74 acts as the Proton donor in catalysis.

The protein belongs to the N(4)-acetylcytidine amidohydrolase family.

The catalysed reaction is N(4)-acetylcytidine + H2O = cytidine + acetate + H(+). It carries out the reaction N(4)-acetyl-2'-deoxycytidine + H2O = 2'-deoxycytidine + acetate + H(+). The enzyme catalyses N(4)-acetylcytosine + H2O = cytosine + acetate + H(+). Catalyzes the hydrolysis of N(4)-acetylcytidine (ac4C). This is N(4)-acetylcytidine amidohydrolase (yqfB) from Escherichia coli (strain SMS-3-5 / SECEC).